A 612-amino-acid polypeptide reads, in one-letter code: Zinc metalloproteinase-disintegrin-like 2a (612 aa).

An N-terminal signal peptide occupies residues 1–20 (MIQVLLVTICLAVFPYQGSS). Residues 21–189 (IILGSGNVND…KKASQLNLTP (169 aa)) constitute a propeptide that is removed on maturation. The 197-residue stretch at 199 to 395 (KYIELVIVAD…NRPPCILNKP (197 aa)) folds into the Peptidase M12B domain. Glu202 lines the Ca(2+) pocket. Asn218 is a glycosylation site (N-linked (GlcNAc...) asparagine). Asp286 is a Ca(2+) binding site. Intrachain disulfides connect Cys310–Cys390, Cys350–Cys374, and Cys352–Cys357. A Zn(2+)-binding site is contributed by His335. Glu336 is an active-site residue. Zn(2+)-binding residues include His339 and His345. Ca(2+) is bound by residues Cys390, Asn393, Val405, Asn408, Phe410, Glu412, Glu415, and Asp418. Residues 403–489 (PPVCGNYFVE…DCPTDNFQRN (87 aa)) enclose the Disintegrin domain. Cystine bridges form between Cys406–Cys435, Cys417–Cys430, Cys419–Cys425, Cys429–Cys452, Cys443–Cys449, Cys448–Cys474, Cys461–Cys481, Cys468–Cys500, Cys493–Cys505, Cys512–Cys562, Cys527–Cys573, Cys540–Cys550, Cys557–Cys599, and Cys593–Cys605. A D/ECD-tripeptide motif is present at residues 467 to 469 (ECD).

Belongs to the venom metalloproteinase (M12B) family. P-III subfamily. Zn(2+) is required as a cofactor. Expressed by the venom gland.

It localises to the secreted. Its function is as follows. Snake venom metalloproteinase that impairs hemostasis in the envenomed animal. The protein is Zinc metalloproteinase-disintegrin-like 2a of Crotalus adamanteus (Eastern diamondback rattlesnake).